The primary structure comprises 172 residues: uncharacterized protein (172 aa).

Belongs to the flavoredoxin family. FMN serves as cofactor.

This is an uncharacterized protein from Pyrococcus horikoshii (strain ATCC 700860 / DSM 12428 / JCM 9974 / NBRC 100139 / OT-3).